The following is a 437-amino-acid chain: Adenylosuccinate synthetase 1 (437 aa).

GTP contacts are provided by residues 13–19 (GDEGKGK) and 41–43 (GHT). Catalysis depends on Asp-14, which acts as the Proton acceptor. Mg(2+) contacts are provided by Asp-14 and Gly-41. IMP is bound by residues 14–17 (DEGK), 39–42 (NAGH), Thr-130, Arg-144, Gln-225, Thr-240, and Arg-310. The active-site Proton donor is the His-42. Residue 306–312 (ATTGRLR) coordinates substrate. GTP is bound by residues Arg-312, 338 to 340 (KLD), and 421 to 423 (STG).

This sequence belongs to the adenylosuccinate synthetase family. In terms of assembly, homodimer. The cofactor is Mg(2+).

The protein resides in the cytoplasm. The enzyme catalyses IMP + L-aspartate + GTP = N(6)-(1,2-dicarboxyethyl)-AMP + GDP + phosphate + 2 H(+). It functions in the pathway purine metabolism; AMP biosynthesis via de novo pathway; AMP from IMP: step 1/2. Its function is as follows. Plays an important role in the de novo pathway of purine nucleotide biosynthesis. Catalyzes the first committed step in the biosynthesis of AMP from IMP. The polypeptide is Adenylosuccinate synthetase 1 (Pseudoalteromonas translucida (strain TAC 125)).